The chain runs to 128 residues: Calcitonin gene-related peptide 1 (128 aa).

The N-terminal stretch at 1-25 (MGFLKFSPFLVVSILLLYQACGLQA) is a signal peptide. Residues 26-80 (VPLRSTLESSPGMAATLSEEEARLLLAALVQNYMQMKVRELEQEQEAEGSSVTAQ) constitute a propeptide that is removed on maturation. Cysteine 84 and cysteine 89 are oxidised to a cystine. Residue phenylalanine 119 is modified to Phenylalanine amide. Positions 125 to 128 (DLQA) are excised as a propeptide.

This sequence belongs to the calcitonin family.

The protein localises to the secreted. CGRP1/CALCA is a peptide hormone that induces vasodilation mediated by the CALCRL-RAMP1 receptor complex. Dilates a variety of vessels including the coronary, cerebral and systemic vasculature. Its abundance in the CNS also points toward a neurotransmitter or neuromodulator role. It also elevates platelet cAMP. CGRP1 can also bind and activate CALCR-RAMP1 (AMYR1) receptor complex. The protein is Calcitonin gene-related peptide 1 of Rattus norvegicus (Rat).